We begin with the raw amino-acid sequence, 100 residues long: Urease subunit gamma (100 aa).

The protein belongs to the urease gamma subunit family. Heterotrimer of UreA (gamma), UreB (beta) and UreC (alpha) subunits. Three heterotrimers associate to form the active enzyme.

Its subcellular location is the cytoplasm. It carries out the reaction urea + 2 H2O + H(+) = hydrogencarbonate + 2 NH4(+). Its pathway is nitrogen metabolism; urea degradation; CO(2) and NH(3) from urea (urease route): step 1/1. The sequence is that of Urease subunit gamma from Blochmanniella floridana.